Reading from the N-terminus, the 274-residue chain is Protein CIMAP1C (274 aa).

A disordered region spans residues 1 to 27 (MKLPKGTRSSVYFAQHPEKEPLPSRQE). Over residues 16–27 (HPEKEPLPSRQE) the composition is skewed to basic and acidic residues. 2 STPGR repeats span residues 199–224 (PGPTTYARPEPSIYQNRSPTYSMAKR) and 235–260 (PGPGSHEVQQVTVHKPHIPAFTMGIK).

Belongs to the CIMAP family.

In Homo sapiens (Human), this protein is Protein CIMAP1C.